The following is a 381-amino-acid chain: Transaldolase 2 (381 aa).

Catalysis depends on lysine 141, which acts as the Schiff-base intermediate with substrate.

It belongs to the transaldolase family. Type 2 subfamily.

It localises to the cytoplasm. The enzyme catalyses D-sedoheptulose 7-phosphate + D-glyceraldehyde 3-phosphate = D-erythrose 4-phosphate + beta-D-fructose 6-phosphate. Its pathway is carbohydrate degradation; pentose phosphate pathway; D-glyceraldehyde 3-phosphate and beta-D-fructose 6-phosphate from D-ribose 5-phosphate and D-xylulose 5-phosphate (non-oxidative stage): step 2/3. In terms of biological role, transaldolase is important for the balance of metabolites in the pentose-phosphate pathway. The polypeptide is Transaldolase 2 (tal2) (Nostoc sp. (strain PCC 7120 / SAG 25.82 / UTEX 2576)).